The primary structure comprises 463 residues: Metalloprotease slr0863 (463 aa).

Belongs to the peptidase U62 family.

In terms of biological role, probable metalloprotease. The polypeptide is Metalloprotease slr0863 (Synechocystis sp. (strain ATCC 27184 / PCC 6803 / Kazusa)).